The sequence spans 125 residues: Oxytocin-neurophysin 1 (125 aa).

A signal peptide spans 1–19 (MAGPSLACCLLGLLALTSA). A disulfide bond links cysteine 20 and cysteine 25. Glycine 28 bears the Glycine amide mark. Disulfide bonds link cysteine 41–cysteine 85, cysteine 44–cysteine 58, cysteine 52–cysteine 75, cysteine 59–cysteine 65, cysteine 92–cysteine 104, cysteine 98–cysteine 116, and cysteine 105–cysteine 110.

The protein belongs to the vasopressin/oxytocin family. As to quaternary structure, interacts with oxytocin receptor (Ki=1.5 nM). Interacts with vasopressin V1aR/AVPR1A (Ki=37 nM), V1bR/AVPR1B (Ki=222 nM), and V2R/AVPR2 receptors (Ki=823 nM).

Its function is as follows. Neurophysin 1 specifically binds oxytocin. Oxytocin causes contraction of the smooth muscle of the uterus and of the mammary gland. Acts by binding to oxytocin receptor (OXTR). The protein is Oxytocin-neurophysin 1 (OXT) of Sus scrofa (Pig).